Consider the following 319-residue polypeptide: Ribonuclease Z (319 aa).

Residues His-62, His-64, Asp-66, His-67, His-139, Asp-209, and His-268 each coordinate Zn(2+). Asp-66 acts as the Proton acceptor in catalysis.

Belongs to the RNase Z family. Homodimer. Zn(2+) serves as cofactor.

The enzyme catalyses Endonucleolytic cleavage of RNA, removing extra 3' nucleotides from tRNA precursor, generating 3' termini of tRNAs. A 3'-hydroxy group is left at the tRNA terminus and a 5'-phosphoryl group is left at the trailer molecule.. Zinc phosphodiesterase, which displays some tRNA 3'-processing endonuclease activity. Probably involved in tRNA maturation, by removing a 3'-trailer from precursor tRNA. This is Ribonuclease Z from Pseudomonas putida (strain ATCC 700007 / DSM 6899 / JCM 31910 / BCRC 17059 / LMG 24140 / F1).